A 466-amino-acid chain; its full sequence is Cysteine--tRNA ligase (466 aa).

Cys28 is a Zn(2+) binding site. The 'HIGH' region motif lies at 30–40; that stretch reads PTVYNFFHIGN. Cys208, His233, and Glu237 together coordinate Zn(2+). A 'KMSKS' region motif is present at residues 265-269; the sequence is KMSKS. Lys268 is a binding site for ATP.

Belongs to the class-I aminoacyl-tRNA synthetase family. In terms of assembly, monomer. Zn(2+) is required as a cofactor.

It is found in the cytoplasm. The catalysed reaction is tRNA(Cys) + L-cysteine + ATP = L-cysteinyl-tRNA(Cys) + AMP + diphosphate. This chain is Cysteine--tRNA ligase, found in Clostridium perfringens (strain ATCC 13124 / DSM 756 / JCM 1290 / NCIMB 6125 / NCTC 8237 / Type A).